The chain runs to 220 residues: Thiamine-phosphate synthase (220 aa).

4-amino-2-methyl-5-(diphosphooxymethyl)pyrimidine-binding positions include 39 to 43 (QLRDK) and Asn80. Mg(2+) contacts are provided by Asp81 and Asp100. Ser119 contacts 4-amino-2-methyl-5-(diphosphooxymethyl)pyrimidine. 2-[(2R,5Z)-2-carboxy-4-methylthiazol-5(2H)-ylidene]ethyl phosphate is bound at residue 145–147 (TPT). Lys148 is a binding site for 4-amino-2-methyl-5-(diphosphooxymethyl)pyrimidine. Gly176 lines the 2-[(2R,5Z)-2-carboxy-4-methylthiazol-5(2H)-ylidene]ethyl phosphate pocket.

The protein belongs to the thiamine-phosphate synthase family. Requires Mg(2+) as cofactor.

The catalysed reaction is 2-[(2R,5Z)-2-carboxy-4-methylthiazol-5(2H)-ylidene]ethyl phosphate + 4-amino-2-methyl-5-(diphosphooxymethyl)pyrimidine + 2 H(+) = thiamine phosphate + CO2 + diphosphate. The enzyme catalyses 2-(2-carboxy-4-methylthiazol-5-yl)ethyl phosphate + 4-amino-2-methyl-5-(diphosphooxymethyl)pyrimidine + 2 H(+) = thiamine phosphate + CO2 + diphosphate. It carries out the reaction 4-methyl-5-(2-phosphooxyethyl)-thiazole + 4-amino-2-methyl-5-(diphosphooxymethyl)pyrimidine + H(+) = thiamine phosphate + diphosphate. The protein operates within cofactor biosynthesis; thiamine diphosphate biosynthesis; thiamine phosphate from 4-amino-2-methyl-5-diphosphomethylpyrimidine and 4-methyl-5-(2-phosphoethyl)-thiazole: step 1/1. Its function is as follows. Condenses 4-methyl-5-(beta-hydroxyethyl)thiazole monophosphate (THZ-P) and 2-methyl-4-amino-5-hydroxymethyl pyrimidine pyrophosphate (HMP-PP) to form thiamine monophosphate (TMP). This chain is Thiamine-phosphate synthase, found in Mycobacterium marinum (strain ATCC BAA-535 / M).